We begin with the raw amino-acid sequence, 52 residues long: ATP synthase protein 8 (52 aa).

The chain crosses the membrane as a helical span at residues 7 to 27 (MKWFLIYFIYLLIFYLFIMLI).

Belongs to the ATPase protein 8 family. As to quaternary structure, F-type ATPases have 2 components, CF(1) - the catalytic core - and CF(0) - the membrane proton channel.

It is found in the mitochondrion membrane. Mitochondrial membrane ATP synthase (F(1)F(0) ATP synthase or Complex V) produces ATP from ADP in the presence of a proton gradient across the membrane which is generated by electron transport complexes of the respiratory chain. F-type ATPases consist of two structural domains, F(1) - containing the extramembraneous catalytic core and F(0) - containing the membrane proton channel, linked together by a central stalk and a peripheral stalk. During catalysis, ATP synthesis in the catalytic domain of F(1) is coupled via a rotary mechanism of the central stalk subunits to proton translocation. Part of the complex F(0) domain. Minor subunit located with subunit a in the membrane. This chain is ATP synthase protein 8 (mt:ATPase8), found in Apis mellifera ligustica (Common honeybee).